Consider the following 87-residue polypeptide: MAKKSLNESSPVARFEQSLEELEQLVQKMEVGEMSLEQSLTAYERGIGLYRDCQQALEQAELRVRLVTDPARPEQAEAFEPPSLDGG.

It belongs to the XseB family. As to quaternary structure, heterooligomer composed of large and small subunits.

It is found in the cytoplasm. It carries out the reaction Exonucleolytic cleavage in either 5'- to 3'- or 3'- to 5'-direction to yield nucleoside 5'-phosphates.. Functionally, bidirectionally degrades single-stranded DNA into large acid-insoluble oligonucleotides, which are then degraded further into small acid-soluble oligonucleotides. The sequence is that of Exodeoxyribonuclease 7 small subunit from Xanthomonas campestris pv. campestris (strain 8004).